The following is a 440-amino-acid chain: Transposon Ty1-PR2 Gag polyprotein (440 aa).

Composition is skewed to polar residues over residues 1-10 (MESQQLSNYP), 48-60 (TKAN…TPAS), and 127-152 (QSQF…GNTF). 3 disordered regions span residues 1-93 (MESQ…MMTQ), 126-173 (PQSQ…RPPP), and 352-440 (GSRN…PETY). The span at 153-165 (TDSSSADSDMTST) shows a compositional bias: low complexity. Residues 299-401 (NNGIHINNKV…NSKSKTARAH (103 aa)) form an RNA-binding region. Residues 402-418 (NVSTSNNSPSTDNDSIS) show a composition bias toward low complexity. Ser-416 bears the Phosphoserine mark. Over residues 419–428 (KSTTEPIQLN) the composition is skewed to polar residues. Residues 429-440 (NKHDLHLRPETY) show a composition bias toward basic and acidic residues.

Homotrimer.

Its subcellular location is the cytoplasm. In terms of biological role, capsid protein (CA) is the structural component of the virus-like particle (VLP), forming the shell that encapsulates the retrotransposons dimeric RNA genome. The particles are assembled from trimer-clustered units and there are holes in the capsid shells that allow for the diffusion of macromolecules. CA also has nucleocapsid-like chaperone activity, promoting primer tRNA(i)-Met annealing to the multipartite primer-binding site (PBS), dimerization of Ty1 RNA and initiation of reverse transcription. The protein is Transposon Ty1-PR2 Gag polyprotein (TY1A-PR2) of Saccharomyces cerevisiae (strain ATCC 204508 / S288c) (Baker's yeast).